A 276-amino-acid polypeptide reads, in one-letter code: Bis(5'-nucleosyl)-tetraphosphatase, symmetrical (276 aa).

This sequence belongs to the Ap4A hydrolase family.

The catalysed reaction is P(1),P(4)-bis(5'-adenosyl) tetraphosphate + H2O = 2 ADP + 2 H(+). Its function is as follows. Hydrolyzes diadenosine 5',5'''-P1,P4-tetraphosphate to yield ADP. The chain is Bis(5'-nucleosyl)-tetraphosphatase, symmetrical from Tolumonas auensis (strain DSM 9187 / NBRC 110442 / TA 4).